Reading from the N-terminus, the 575-residue chain is FAD-linked oxidoreductase asqF (575 aa).

A signal peptide spans 1–23 (MALFRLSAAIVVIFLYIWSPSQR). N-linked (GlcNAc...) asparagine glycosylation is found at Asn45 and Asn80. Positions 118-306 (NQGRIPLYAA…VRVTMRTYPD (189 aa)) constitute an FAD-binding PCMH-type domain. Pros-8alpha-FAD histidine is present on His156. Residue Asn370 is glycosylated (N-linked (GlcNAc...) asparagine).

This sequence belongs to the oxygen-dependent FAD-linked oxidoreductase family. FAD serves as cofactor.

It catalyses the reaction peniprequinolone + A = yaequinolone E + AH2. It functions in the pathway secondary metabolite biosynthesis. The protein operates within alkaloid biosynthesis. It participates in mycotoxin biosynthesis. Functionally, FAD-linked oxidoreductase; part of the gene cluster that mediates the biosynthesis of the aspoquinolone mycotoxins. Within the pathway, asqF performs FAD-dependent dehydrogenation of the dimethylallyl quinolone peniprequinolone to yield the conjugated aryl diene yaequinolone E. The first step of the pathway is catalyzed by the nonribosomal peptide synthetase asqK that condenses anthranilic acid and O-methyl-L-tyrosine to produce 4'-methoxycyclopeptin. 4'-methoxycyclopeptin is then converted to 4'-methoxydehydrocyclopeptin by the ketoglutarate-dependent dioxygenase asqJ. AsqJ also converts its first product 4'-methoxydehydrocyclopeptin to 4'-methoxycyclopenin. The following conversion of 4'-methoxycyclopenin into 4'-methoxyviridicatin is catalyzed by the cyclopenase asqI. 4'-methoxyviridicatin is the precursor of quinolone natural products, and is further converted to quinolinone B. The prenyltransferase asqH1 then catalyzes the canonical Friedel-Crafts alkylation of quinolinone B with dimethylallyl cation to yield dimethylallyl quinolone, which is subjected to FAD-dependent dehydrogenation by the FAD-linked oxidoreductase asqF to yield conjugated aryl diene. The delta(3') double bond then serves as the site of the second alkylation with DMAPP catalyzed by the prenyltransferase asqH2 to yield a carbenium ion intermediate, which can be attacked by H(2)O to yield a styrenyl quinolone containing a C3'-hydroxyprenyl chain. The FAD-dependent monooxygenase asqG performs epoxidation of the terminal C7'-C8' olefin. Finally, after dehydratation of the epoxide at C3 by asqC, the quinolone epoxide rearrangement protein asqO catalyzes an enzymatic 3-exo-tet cyclization to yield the cyclopropyl-THF ring system in aspoquinolone. The chain is FAD-linked oxidoreductase asqF from Emericella nidulans (strain FGSC A4 / ATCC 38163 / CBS 112.46 / NRRL 194 / M139) (Aspergillus nidulans).